Consider the following 1071-residue polypeptide: Exportin-1 (1071 aa).

Residues 1–679 (MPAIMTMLAD…QQATKNVDIL (679 aa)) are necessary for HTLV-1 Rex-mediated mRNA export. Residues 46–112 (AQEVLTHLKE…KKYVVGLIIK (67 aa)) enclose the Importin N-terminal domain. HEAT repeat units lie at residues 217–240 (QNAP…PLGY), 241–277 (IFET…VSVS), 354–472 (MLLV…YVDT), 515–553 (RFLV…QYPR), 560–597 (KFLK…KCRR), and 602–639 (VQVG…AVGY). An interaction with Ran and nuclear export complex formation region spans residues 327-450 (CTFLKEHDQL…VREFMKDTDS (124 aa)). Ser391 is subject to Phosphoserine. The interval 411–414 (PMLF) is necessary for HTLV-1 Rex multimerization. Residues 411–481 (PMLFKVRLLM…TERIMTEKLH (71 aa)) are interaction with RANBP3. Lys446 carries the post-translational modification N6-acetyllysine. Position 448 is a phosphothreonine (Thr448). Ser450 carries the phosphoserine modification. Tyr454 carries the phosphotyrosine modification. An N6-acetyllysine modification is found at Lys693. HEAT repeat units follow at residues 775-813 (NFVP…KLGG), 885-916 (TMRN…SFYQ), 917-954 (TYFC…NLVE), and 1002-1039 (FSLN…EERE). The tract at residues 800–820 (VLSTMAIIVNKLGGHITAEIP) is interaction with HIV-1 Rev. Position 1031 is a phosphoserine (Ser1031).

Belongs to the exportin family. As to quaternary structure, found in a U snRNA export complex with PHAX/RNUXA, NCBP1/CBP80, NCBP2/CBP20, RAN, XPO1 and m7G-capped RNA. Component of a nuclear export receptor complex composed of KPNB1, RAN, SNUPN and XPO1. Found in a trimeric export complex with SNUPN, RAN and XPO1. Found in a nuclear export complex with RANBP3 and RAN. Found in a 60S ribosomal subunit export complex with NMD3, RAN, XPO1. Interacts with DDX3X, NMD3, NUP42, NUP88, NUP214, RANBP3 and TERT. Interacts with NEMF (via its N-terminus). Interacts with the monomeric form of BIRC5/survivin deacetylated at 'Lys-129'. Interacts with DTNBP1 and SERTAD2; the interactions translocate DTNBP1 and SERTAD2 out of the nucleus. Interacts with ATF2. Interacts with SLC35G1 and STIM1. Interacts with DCAF8. Interacts with CPEB3. Interacts with HAX1. Interacts with BOK; translocates to the cytoplasm. Interacts with HSP90AB1. Interacts with LRPPRC; interacts with LRPPRC alone and also when LRPPRC is in complex with EIF4E and with EIF4E sensitivity element (4ESE)-containing mRNAs to form an EIF4E-dependent mRNA export complex. (Microbial infection) Interacts with HIV-1 Rev. In terms of assembly, (Microbial infection) Interacts with HTLV-1 Rex. As to quaternary structure, (Microbial infection) Interacts with influenza A nucleoprotein. (Microbial infection) Interacts with Epstein-Barr virus protein BMLF1. In terms of assembly, (Microbial infection) Part of a tetrameric complex composed of CRM1, importin alpha/beta dimer and the Venezuelan equine encephalitis virus (VEEV) capsid; this complex blocks the receptor-mediated transport through the nuclear pore. As to quaternary structure, (Microbial infection) Interacts with SARS-CoV virus protein ORF9b; this interaction mediates protein ORF9b export out of the nucleus. In terms of tissue distribution, expressed in heart, brain, placenta, lung, liver, skeletal muscle, pancreas, spleen, thymus, prostate, testis, ovary, small intestine, colon and peripheral blood leukocytes. Not expressed in the kidney.

It localises to the cytoplasm. Its subcellular location is the nucleus. The protein resides in the nucleoplasm. It is found in the cajal body. The protein localises to the nucleolus. Its function is as follows. Mediates the nuclear export of cellular proteins (cargos) bearing a leucine-rich nuclear export signal (NES) and of RNAs. In the nucleus, in association with RANBP3, binds cooperatively to the NES on its target protein and to the GTPase RAN in its active GTP-bound form (Ran-GTP). Docking of this complex to the nuclear pore complex (NPC) is mediated through binding to nucleoporins. Upon transit of a nuclear export complex into the cytoplasm, disassembling of the complex and hydrolysis of Ran-GTP to Ran-GDP (induced by RANBP1 and RANGAP1, respectively) cause release of the cargo from the export receptor. The directionality of nuclear export is thought to be conferred by an asymmetric distribution of the GTP- and GDP-bound forms of Ran between the cytoplasm and nucleus. Involved in U3 snoRNA transport from Cajal bodies to nucleoli. Binds to late precursor U3 snoRNA bearing a TMG cap. In terms of biological role, (Microbial infection) Mediates the export of unspliced or incompletely spliced RNAs out of the nucleus from different viruses including HIV-1, HTLV-1 and influenza A. Interacts with, and mediates the nuclear export of HIV-1 Rev and HTLV-1 Rex proteins. Involved in HTLV-1 Rex multimerization. This Homo sapiens (Human) protein is Exportin-1 (XPO1).